A 477-amino-acid polypeptide reads, in one-letter code: Aspartyl/glutamyl-tRNA(Asn/Gln) amidotransferase subunit B (477 aa).

The protein belongs to the GatB/GatE family. GatB subfamily. In terms of assembly, heterotrimer of A, B and C subunits.

The catalysed reaction is L-glutamyl-tRNA(Gln) + L-glutamine + ATP + H2O = L-glutaminyl-tRNA(Gln) + L-glutamate + ADP + phosphate + H(+). The enzyme catalyses L-aspartyl-tRNA(Asn) + L-glutamine + ATP + H2O = L-asparaginyl-tRNA(Asn) + L-glutamate + ADP + phosphate + 2 H(+). Its function is as follows. Allows the formation of correctly charged Asn-tRNA(Asn) or Gln-tRNA(Gln) through the transamidation of misacylated Asp-tRNA(Asn) or Glu-tRNA(Gln) in organisms which lack either or both of asparaginyl-tRNA or glutaminyl-tRNA synthetases. The reaction takes place in the presence of glutamine and ATP through an activated phospho-Asp-tRNA(Asn) or phospho-Glu-tRNA(Gln). The sequence is that of Aspartyl/glutamyl-tRNA(Asn/Gln) amidotransferase subunit B from Lawsonia intracellularis (strain PHE/MN1-00).